A 155-amino-acid polypeptide reads, in one-letter code: Ribonuclease H (155 aa).

The region spanning Met1–Met142 is the RNase H type-1 domain. Mg(2+) is bound by residues Asp10, Glu48, Asp70, and Asp134.

Belongs to the RNase H family. In terms of assembly, monomer. Requires Mg(2+) as cofactor.

The protein localises to the cytoplasm. It catalyses the reaction Endonucleolytic cleavage to 5'-phosphomonoester.. Endonuclease that specifically degrades the RNA of RNA-DNA hybrids. The protein is Ribonuclease H of Salmonella paratyphi C (strain RKS4594).